A 175-amino-acid polypeptide reads, in one-letter code: MAEVHVIGQIMGATGFSESSLFCKWGVHTGAAWKLLSGVREGQTQVDTPQIGDMAYWSHPIDLHFATKGLQGWPRLHLQVWSQDSFGRCQLAGYGFCHVPSSPGTHQLDCPTWRPLGSWREQLARAFVGGGPQLLHGDAIYSGADRYRLHTTSGGTVHLELSLLLRHFDRYGVEC.

One can recognise a C2 B9-type domain in the interval 2 to 118 (AEVHVIGQIM…DCPTWRPLGS (117 aa)).

It belongs to the B9D family. Part of the tectonic-like complex (also named B9 complex). Interacts with TUBG1.

The protein localises to the cytoplasm. It is found in the cytoskeleton. Its subcellular location is the cilium basal body. It localises to the cilium axoneme. The protein resides in the nucleus. Its function is as follows. Component of the tectonic-like complex, a complex localized at the transition zone of primary cilia and acting as a barrier that prevents diffusion of transmembrane proteins between the cilia and plasma membranes. This Bos taurus (Bovine) protein is B9 domain-containing protein 2 (B9D2).